A 315-amino-acid chain; its full sequence is Melanoma-associated antigen 9 (315 aa).

Basic and acidic residues predominate over residues 1–13 (MSLEQRSPHCKPD). The segment at 1-67 (MSLEQRSPHC…PQSPQGGASS (67 aa)) is disordered. A compositionally biased stretch (low complexity) spans 50 to 67 (SAAGSSSPPQSPQGGASS). The MAGE domain maps to 108 to 307 (LKLKVAELVH…ICYPSLYEEV (200 aa)).

In terms of tissue distribution, expressed in many tumors of several types, such as melanoma, head and neck squamous cell carcinoma, lung carcinoma and breast carcinoma, but not in normal tissues except for testes and placenta.

Its function is as follows. Not known, though may play a role in embryonal development and tumor transformation or aspects of tumor progression. The polypeptide is Melanoma-associated antigen 9 (MAGEA9) (Homo sapiens (Human)).